The sequence spans 178 residues: ATP synthase subunit delta (178 aa).

This sequence belongs to the ATPase delta chain family. As to quaternary structure, F-type ATPases have 2 components, F(1) - the catalytic core - and F(0) - the membrane proton channel. F(1) has five subunits: alpha(3), beta(3), gamma(1), delta(1), epsilon(1). F(0) has three main subunits: a(1), b(2) and c(10-14). The alpha and beta chains form an alternating ring which encloses part of the gamma chain. F(1) is attached to F(0) by a central stalk formed by the gamma and epsilon chains, while a peripheral stalk is formed by the delta and b chains.

The protein resides in the cell inner membrane. In terms of biological role, f(1)F(0) ATP synthase produces ATP from ADP in the presence of a proton or sodium gradient. F-type ATPases consist of two structural domains, F(1) containing the extramembraneous catalytic core and F(0) containing the membrane proton channel, linked together by a central stalk and a peripheral stalk. During catalysis, ATP synthesis in the catalytic domain of F(1) is coupled via a rotary mechanism of the central stalk subunits to proton translocation. Functionally, this protein is part of the stalk that links CF(0) to CF(1). It either transmits conformational changes from CF(0) to CF(1) or is implicated in proton conduction. In Hydrogenovibrio crunogenus (strain DSM 25203 / XCL-2) (Thiomicrospira crunogena), this protein is ATP synthase subunit delta.